The primary structure comprises 236 residues: UPF0502 protein Bcep1808_3727 (236 aa).

This sequence belongs to the UPF0502 family.

In Burkholderia vietnamiensis (strain G4 / LMG 22486) (Burkholderia cepacia (strain R1808)), this protein is UPF0502 protein Bcep1808_3727.